The following is a 290-amino-acid chain: Small ribosomal subunit protein uS11 (290 aa).

Positions 243 to 271 (DWEAAPAGFPATGEWSDAAPGAAAPNWDA) are disordered. The span at 257-271 (WSDAAPGAAAPNWDA) shows a compositional bias: low complexity.

It belongs to the universal ribosomal protein uS2 family. Component of the small ribosomal subunit (SSU). Mature N.crassa ribosomes consist of a small (40S) and a large (60S) subunit. The 40S small subunit contains 1 molecule of ribosomal RNA (18S rRNA) and at least 32 different proteins. The large 60S subunit contains 3 rRNA molecules (26S, 5.8S and 5S rRNA) and at least 42 different proteins. Interacts with rps21.

The protein localises to the cytoplasm. Functionally, component of the ribosome, a large ribonucleoprotein complex responsible for the synthesis of proteins in the cell. The small ribosomal subunit (SSU) binds messenger RNAs (mRNAs) and translates the encoded message by selecting cognate aminoacyl-transfer RNA (tRNA) molecules. The large subunit (LSU) contains the ribosomal catalytic site termed the peptidyl transferase center (PTC), which catalyzes the formation of peptide bonds, thereby polymerizing the amino acids delivered by tRNAs into a polypeptide chain. The nascent polypeptides leave the ribosome through a tunnel in the LSU and interact with protein factors that function in enzymatic processing, targeting, and the membrane insertion of nascent chains at the exit of the ribosomal tunnel. uS2 is required for the assembly and/or stability of the 40S ribosomal subunit. Required for the processing of the 20S rRNA-precursor to mature 18S rRNA in a late step of the maturation of 40S ribosomal subunits. The protein is Small ribosomal subunit protein uS11 of Neurospora crassa (strain ATCC 24698 / 74-OR23-1A / CBS 708.71 / DSM 1257 / FGSC 987).